A 225-amino-acid chain; its full sequence is Rho GDP-dissociation inhibitor 3 (225 aa).

Belongs to the Rho GDI family.

It localises to the cytoplasm. Functionally, inhibits GDP/GTP exchange reaction of RhoB. Interacts specifically with the GDP- and GTP-bound forms of post-translationally processed Rhob and Rhog proteins, both of which show a growth-regulated expression in mammalian cells. Stimulates the release of the GDP-bound but not the GTP-bound RhoB protein. Also inhibits the GDP/GTP exchange of RhoB but shows less ability to inhibit the dissociation of prebound GTP. The polypeptide is Rho GDP-dissociation inhibitor 3 (ARHGDIG) (Bos taurus (Bovine)).